We begin with the raw amino-acid sequence, 184 residues long: Probable N-acetyltransferase san (184 aa).

In terms of domain architecture, N-acetyltransferase spans 6–155 (IELGDVTPHN…DAHVLQKTLR (150 aa)). Position 31 (Tyr-31) interacts with substrate. Lys-47 bears the N6-acetyllysine; by autocatalysis mark. Tyr-73 is an active-site residue. Met-75 contributes to the substrate binding site. 77-90 (LGCLSPYRRLGIGT) provides a ligand contact to acetyl-CoA. His-112 is an active-site residue. 117-126 (NNGAIEFYKK) contacts CoA. Residues 138 to 141 (YYKR) are substrate. A compositionally biased stretch (low complexity) spans 157–174 (TAPNSNSTATSTTANSNS). The interval 157 to 176 (TAPNSNSTATSTTANSNSRS) is disordered.

This sequence belongs to the acetyltransferase family. As to quaternary structure, component of an acetyltransferase complex, at least composed of san, Ard1 and Nat1. Post-translationally, autoacetylated.

It is found in the cytoplasm. The catalysed reaction is N-terminal L-methionyl-L-alanyl-[protein] + acetyl-CoA = N-terminal N(alpha)-acetyl-L-methionyl-L-alanyl-[protein] + CoA + H(+). The enzyme catalyses N-terminal L-methionyl-L-seryl-[protein] + acetyl-CoA = N-terminal N(alpha)-acetyl-L-methionyl-L-seryl-[protein] + CoA + H(+). It carries out the reaction N-terminal L-methionyl-L-valyl-[protein] + acetyl-CoA = N-terminal N(alpha)-acetyl-L-methionyl-L-valyl-[protein] + CoA + H(+). It catalyses the reaction N-terminal L-methionyl-L-threonyl-[protein] + acetyl-CoA = N-terminal N(alpha)-acetyl-L-methionyl-L-threonyl-[protein] + CoA + H(+). The catalysed reaction is N-terminal L-methionyl-L-lysyl-[protein] + acetyl-CoA = N-terminal N(alpha)-acetyl-L-methionyl-L-lysyl-[protein] + CoA + H(+). The enzyme catalyses N-terminal L-methionyl-L-leucyl-[protein] + acetyl-CoA = N-terminal N(alpha)-acetyl-L-methionyl-L-leucyl-[protein] + CoA + H(+). It carries out the reaction N-terminal L-methionyl-L-phenylalanyl-[protein] + acetyl-CoA = N-terminal N(alpha)-acetyl-L-methionyl-L-phenylalanyl-[protein] + CoA + H(+). It catalyses the reaction N-terminal L-methionyl-L-tyrosyl-[protein] + acetyl-CoA = N-terminal N(alpha)-acetyl-L-methionyl-L-tyrosyl-[protein] + CoA + H(+). N-alpha-acetyltransferase that acetylates the N-terminus of proteins that retain their initiating methionine. Has a broad substrate specificity: able to acetylate the initiator methionine of most peptides. Also displays N-epsilon-acetyltransferase activity by mediating acetylation of the side chain of specific lysines on proteins. Autoacetylates. Required for the establishment of sister chromatid cohesion and couple the processes of cohesion and DNA replication to ensure that only sister chromatids become paired together. Required for the interaction between Scc1/vtd and SMC3, possibly by mediating N-terminal acetylation of Scc1/vtd. Its function is as follows. (Microbial infection) Required for optimal replication of E.chaffeensis in the immune tissues, hemocytes, and fat body. This Drosophila melanogaster (Fruit fly) protein is Probable N-acetyltransferase san (san).